Reading from the N-terminus, the 249-residue chain is Ribonuclease 3 (249 aa).

The region spanning 21–149 (VDHQPLIDAL…LLGAIYLAHG (129 aa)) is the RNase III domain. E62 serves as a coordination point for Mg(2+). Residue D66 is part of the active site. Mg(2+) is bound by residues D135 and E138. E138 is a catalytic residue. Residues 176–244 (DWKTTLQERL…AHKAVGFLQD (69 aa)) form the DRBM domain.

It belongs to the ribonuclease III family. As to quaternary structure, homodimer. Mg(2+) is required as a cofactor.

It localises to the cytoplasm. The enzyme catalyses Endonucleolytic cleavage to 5'-phosphomonoester.. Its function is as follows. Digests double-stranded RNA. Involved in the processing of primary rRNA transcript to yield the immediate precursors to the large and small rRNAs (23S and 16S). Processes some mRNAs, and tRNAs when they are encoded in the rRNA operon. Processes pre-crRNA and tracrRNA of type II CRISPR loci if present in the organism. The polypeptide is Ribonuclease 3 (Corynebacterium diphtheriae (strain ATCC 700971 / NCTC 13129 / Biotype gravis)).